The following is a 397-amino-acid chain: Lysophospholipid transporter LplT (397 aa).

Residues 1–17 (MSESVHTNTSLWSKGMK) lie on the Periplasmic side of the membrane. The helical transmembrane segment at 18 to 38 (AVIVAQFLSAFGDNALLFATL) threads the bilayer. Topologically, residues 39-52 (ALLKAQFYPEWSQP) are cytoplasmic. A helical transmembrane segment spans residues 53 to 73 (ILQMVFVGAYILFAPFVGQVA). Over 74–90 (DSFAKGRVMMFANGLKL) the chain is Periplasmic. The helical transmembrane segment at 91-111 (LGAASICFGINPFLGYTLVGV) threads the bilayer. Over 112–144 (GAAAYSPAKYGILGELTTGSKLVKANGLMEAST) the chain is Cytoplasmic. Residues 145-165 (IAAILLGSVAGGVLADWHVLV) traverse the membrane as a helical segment. Residue A166 is a topological domain, periplasmic. A helical transmembrane segment spans residues 167 to 187 (LAACALAYGGAVVANIYIPKL). The Cytoplasmic segment spans residues 188 to 226 (AAARPGQSWNLINMTRSFLNACTSLWRNGETRFSLVGTS). The helical transmembrane segment at 227–247 (LFWGAGVTLRFLLVLWVPVAL) threads the bilayer. The Periplasmic portion of the chain corresponds to 248–256 (GITDNATPT). The helical transmembrane segment at 257–277 (YLNAMVAIGIVVGAGAAAKLV) threads the bilayer. The Cytoplasmic segment spans residues 278 to 280 (TLE). The helical transmembrane segment at 281-301 (TVSRCMPAGILIGVVVLIFSL) threads the bilayer. The Periplasmic portion of the chain corresponds to 302-304 (QHE). Residues 305–325 (LLPAYALLMLIGVLGGFFVVP) traverse the membrane as a helical segment. Over 326-343 (LNALLQERGKKSVGAGNA) the chain is Cytoplasmic. A helical membrane pass occupies residues 344 to 364 (IAVQNLGENSAMLLMLGIYSL). Over 365-366 (AV) the chain is Periplasmic. Residues 367–387 (MVGIPVVPIGIGFGALFALAI) traverse the membrane as a helical segment. The Cytoplasmic segment spans residues 388–397 (TALWIWQRRH).

The protein belongs to the major facilitator superfamily. LplT (TC 2.A.1.42) family.

It is found in the cell inner membrane. Its function is as follows. Catalyzes the facilitated diffusion of 2-acyl-glycero-3-phosphoethanolamine (2-acyl-GPE) into the cell. The polypeptide is Lysophospholipid transporter LplT (Escherichia coli (strain SMS-3-5 / SECEC)).